The sequence spans 78 residues: U7-lycotoxin-Ls1f (78 aa).

The N-terminal stretch at 1-22 (MKLIIFTGLALLLIVSLIDVEA) is a signal peptide. A propeptide spanning residues 23–26 (QNEG) is cleaved from the precursor.

It belongs to the neurotoxin 19 (CSTX) family. 07 (U7-Lctx) subfamily. In terms of processing, contains 4 disulfide bonds. In terms of tissue distribution, expressed by the venom gland.

The protein resides in the secreted. This chain is U7-lycotoxin-Ls1f, found in Lycosa singoriensis (Wolf spider).